Reading from the N-terminus, the 230-residue chain is Cytidylate kinase (230 aa).

12–20 (GPSGTGKST) serves as a coordination point for ATP.

It belongs to the cytidylate kinase family. Type 1 subfamily.

It is found in the cytoplasm. It carries out the reaction CMP + ATP = CDP + ADP. The catalysed reaction is dCMP + ATP = dCDP + ADP. The sequence is that of Cytidylate kinase from Corynebacterium efficiens (strain DSM 44549 / YS-314 / AJ 12310 / JCM 11189 / NBRC 100395).